The following is a 251-amino-acid chain: Isoprenyl transferase (251 aa).

Residue Asp-24 is part of the active site. Asp-24 provides a ligand contact to Mg(2+). Residues 25–28, Trp-29, Arg-37, His-41, and 69–71 contribute to the substrate site; these read GNGR and STE. The active-site Proton acceptor is Asn-72. Substrate is bound by residues Trp-73, Arg-75, Arg-186, and 192–194; that span reads RIS. Glu-205 serves as a coordination point for Mg(2+).

Belongs to the UPP synthase family. As to quaternary structure, homodimer. Mg(2+) is required as a cofactor.

Catalyzes the condensation of isopentenyl diphosphate (IPP) with allylic pyrophosphates generating different type of terpenoids. The sequence is that of Isoprenyl transferase from Chromobacterium violaceum (strain ATCC 12472 / DSM 30191 / JCM 1249 / CCUG 213 / NBRC 12614 / NCIMB 9131 / NCTC 9757 / MK).